The chain runs to 158 residues: D-aminoacyl-tRNA deacylase (158 aa).

A Gly-cisPro motif, important for rejection of L-amino acids motif is present at residues Gly-138–Pro-139.

It belongs to the DTD family. In terms of assembly, homodimer.

Its subcellular location is the cytoplasm. It carries out the reaction glycyl-tRNA(Ala) + H2O = tRNA(Ala) + glycine + H(+). The catalysed reaction is a D-aminoacyl-tRNA + H2O = a tRNA + a D-alpha-amino acid + H(+). Its function is as follows. An aminoacyl-tRNA editing enzyme that deacylates mischarged D-aminoacyl-tRNAs. Hydrolyzes correctly charged, achiral, glycyl-tRNA(Gly). Deacylates mischarged endogenous and E.coli glycyl-tRNA(Ala), protecting cells against glycine mischarging by AlaRS. Acts via tRNA-based rather than protein-based catalysis; rejects L-amino acids rather than detecting D-amino acids in the active site. By recycling D-aminoacyl-tRNA to D-amino acids and free tRNA molecules, this enzyme counteracts the toxicity associated with the formation of D-aminoacyl-tRNA entities in vivo and helps enforce protein L-homochirality. In Drosophila melanogaster (Fruit fly), this protein is D-aminoacyl-tRNA deacylase.